The sequence spans 173 residues: Bifunctional protein PyrR (173 aa).

The PRPP-binding motif lies at 93–105; sequence VILVDDVLYTGRT.

Belongs to the purine/pyrimidine phosphoribosyltransferase family. PyrR subfamily. Homodimer and homohexamer; in equilibrium.

The enzyme catalyses UMP + diphosphate = 5-phospho-alpha-D-ribose 1-diphosphate + uracil. In terms of biological role, regulates transcriptional attenuation of the pyrimidine nucleotide (pyr) operon by binding in a uridine-dependent manner to specific sites on pyr mRNA. This disrupts an antiterminator hairpin in the RNA and favors formation of a downstream transcription terminator, leading to a reduced expression of downstream genes. Functionally, also displays a weak uracil phosphoribosyltransferase activity which is not physiologically significant. The polypeptide is Bifunctional protein PyrR (Streptococcus pneumoniae (strain 70585)).